A 291-amino-acid polypeptide reads, in one-letter code: ATP synthase gamma chain (291 aa).

It belongs to the ATPase gamma chain family. In terms of assembly, F-type ATPases have 2 components, CF(1) - the catalytic core - and CF(0) - the membrane proton channel. CF(1) has five subunits: alpha(3), beta(3), gamma(1), delta(1), epsilon(1). CF(0) has three main subunits: a, b and c.

It is found in the cell inner membrane. In terms of biological role, produces ATP from ADP in the presence of a proton gradient across the membrane. The gamma chain is believed to be important in regulating ATPase activity and the flow of protons through the CF(0) complex. This chain is ATP synthase gamma chain, found in Sphingopyxis alaskensis (strain DSM 13593 / LMG 18877 / RB2256) (Sphingomonas alaskensis).